The sequence spans 154 residues: uncharacterized protein (154 aa).

This is an uncharacterized protein from Saccharomyces cerevisiae (strain ATCC 204508 / S288c) (Baker's yeast).